We begin with the raw amino-acid sequence, 126 residues long: Fluoride-specific ion channel FluC (126 aa).

The next 4 membrane-spanning stretches (helical) occupy residues 9 to 29, 35 to 55, 63 to 83, and 94 to 114; these read LAVF…GFQL, LTAT…LYAI, LLHL…SFVL, and WSIG…AAIL. Na(+)-binding residues include G73 and S76.

Belongs to the fluoride channel Fluc/FEX (TC 1.A.43) family.

It is found in the cell inner membrane. The catalysed reaction is fluoride(in) = fluoride(out). Na(+) is not transported, but it plays an essential structural role and its presence is essential for fluoride channel function. Its function is as follows. Fluoride-specific ion channel. Important for reducing fluoride concentration in the cell, thus reducing its toxicity. The polypeptide is Fluoride-specific ion channel FluC (Ruegeria pomeroyi (strain ATCC 700808 / DSM 15171 / DSS-3) (Silicibacter pomeroyi)).